Consider the following 280-residue polypeptide: Shikimate dehydrogenase (NADP(+)) (280 aa).

Shikimate-binding positions include 23–25 (SLS) and T70. Catalysis depends on K74, which acts as the Proton acceptor. Shikimate is bound by residues N95 and D111. NADP(+)-binding positions include 135–139 (GSGGA), 158–163 (NRTISK), and I221. Position 223 (Y223) interacts with shikimate. G247 is an NADP(+) binding site.

This sequence belongs to the shikimate dehydrogenase family. Homodimer.

It catalyses the reaction shikimate + NADP(+) = 3-dehydroshikimate + NADPH + H(+). It participates in metabolic intermediate biosynthesis; chorismate biosynthesis; chorismate from D-erythrose 4-phosphate and phosphoenolpyruvate: step 4/7. Functionally, involved in the biosynthesis of the chorismate, which leads to the biosynthesis of aromatic amino acids. Catalyzes the reversible NADPH linked reduction of 3-dehydroshikimate (DHSA) to yield shikimate (SA). The protein is Shikimate dehydrogenase (NADP(+)) of Buchnera aphidicola subsp. Cinara cedri (strain Cc).